Consider the following 94-residue polypeptide: Small ribosomal subunit protein uS19 (94 aa).

Belongs to the universal ribosomal protein uS19 family.

Its function is as follows. Protein S19 forms a complex with S13 that binds strongly to the 16S ribosomal RNA. This chain is Small ribosomal subunit protein uS19, found in Desulforudis audaxviator (strain MP104C).